Reading from the N-terminus, the 221-residue chain is UPF0328 protein ECU11_2110 (221 aa).

The protein belongs to the UPF0328 family.

In Encephalitozoon cuniculi (strain GB-M1) (Microsporidian parasite), this protein is UPF0328 protein ECU11_2110.